We begin with the raw amino-acid sequence, 289 residues long: Cysteine-rich venom protein Mr30 (289 aa).

The signal sequence occupies residues 1 to 24 (MLSTMQTVGAILMLSIVFVAGTKR). Glu-33 is modified (4-carboxyglutamate). The 123-residue stretch at 62-184 (VRMHNVIRAT…GEDRYFVCNY (123 aa)) folds into the SCP domain.

It belongs to the CRISP family. Contains 11 disulfide bonds. Expressed by the venom duct.

The protein localises to the secreted. Has no proteolytic activity. This chain is Cysteine-rich venom protein Mr30, found in Conus marmoreus (Marble cone).